Here is a 319-residue protein sequence, read N- to C-terminus: Ficolin-2 (319 aa).

Positions 1–22 (MVLGSAALFVLSLCVTELTLHA) are cleaved as a signal peptide. Positions 45 to 101 (GCPGLPGALGPKGEAGAKGDRGESGLPGHPGKAGPTGPKGDRGEKGVRGEKGDTGPS) constitute a Collagen-like domain. The segment at 53-106 (LGPKGEAGAKGDRGESGLPGHPGKAGPTGPKGDRGEKGVRGEKGDTGPSQSCAT) is disordered. Positions 83-97 (KGDRGEKGVRGEKGD) are enriched in basic and acidic residues. The 218-residue stretch at 102–319 (QSCATGPRTC…KVSEMKVRLI (218 aa)) folds into the Fibrinogen C-terminal domain. Intrachain disulfides connect Cys-104–Cys-132 and Cys-111–Cys-139. Asp-255, Asp-257, and Ser-261 together coordinate Ca(2+). A disulfide bridge connects residues Cys-263 and Cys-276. N-linked (GlcNAc...) asparagine glycosylation is present at Asn-306.

Belongs to the ficolin lectin family. As to quaternary structure, homotrimer. Interacts with elastin. Interacts with MASP1 and MASP2.

It localises to the secreted. Functionally, may function in innate immunity through activation of the lectin complement pathway. Calcium-dependent and GlcNAc-binding lectin. The polypeptide is Ficolin-2 (Fcn2) (Rattus norvegicus (Rat)).